Consider the following 166-residue polypeptide: Interferon gamma (166 aa).

Residues 1–23 form the signal peptide; it reads MNYTSYILAFQLCVILGSSGCYC. Glutamine 24 carries the pyrrolidone carboxylic acid modification. N-linked (GlcNAc...) asparagine glycosylation is found at asparagine 39 and asparagine 106. The tract at residues 147 to 166 is disordered; it reads SNLRKRKRRQNQIQGRRASK.

It belongs to the type II (or gamma) interferon family. In terms of assembly, homodimer. Interacts with IFNGR1 (via extracellular domain); this interaction promotes IFNGR1 dimerization. In terms of tissue distribution, released primarily from activated T lymphocytes.

The protein localises to the secreted. In terms of biological role, type II interferon produced by immune cells such as T-cells and NK cells that plays crucial roles in antimicrobial, antiviral, and antitumor responses by activating effector immune cells and enhancing antigen presentation. Primarily signals through the JAK-STAT pathway after interaction with its receptor IFNGR1 to affect gene regulation. Upon IFNG binding, IFNGR1 intracellular domain opens out to allow association of downstream signaling components JAK2, JAK1 and STAT1, leading to STAT1 activation, nuclear translocation and transcription of IFNG-regulated genes. Many of the induced genes are transcription factors such as IRF1 that are able to further drive regulation of a next wave of transcription. Plays a role in class I antigen presentation pathway by inducing a replacement of catalytic proteasome subunits with immunoproteasome subunits. In turn, increases the quantity, quality, and repertoire of peptides for class I MHC loading. Increases the efficiency of peptide generation also by inducing the expression of activator PA28 that associates with the proteasome and alters its proteolytic cleavage preference. Up-regulates as well MHC II complexes on the cell surface by promoting expression of several key molecules such as cathepsins B/CTSB, H/CTSH, and L/CTSL. Participates in the regulation of hematopoietic stem cells during development and under homeostatic conditions by affecting their development, quiescence, and differentiation. This is Interferon gamma (IFNG) from Lama glama (Llama).